Reading from the N-terminus, the 242-residue chain is Small ribosomal subunit protein uS7m (242 aa).

The transit peptide at 1 to 37 (MAAPTAKVSRGWSGLALGVRIAVLRLPGLTQVRWSRY) directs the protein to the mitochondrion. Residue lysine 228 is modified to N6-acetyllysine.

Belongs to the universal ribosomal protein uS7 family. Component of the mitochondrial ribosome small subunit (28S) which comprises a 12S rRNA and about 30 distinct proteins.

It localises to the mitochondrion. This chain is Small ribosomal subunit protein uS7m (MRPS7), found in Bos taurus (Bovine).